The sequence spans 689 residues: Glycine--tRNA ligase beta subunit (689 aa).

The protein belongs to the class-II aminoacyl-tRNA synthetase family. In terms of assembly, tetramer of two alpha and two beta subunits.

The protein resides in the cytoplasm. It carries out the reaction tRNA(Gly) + glycine + ATP = glycyl-tRNA(Gly) + AMP + diphosphate. This chain is Glycine--tRNA ligase beta subunit, found in Aeromonas salmonicida (strain A449).